Consider the following 126-residue polypeptide: Holo-[acyl-carrier-protein] synthase (126 aa).

Positions 9 and 57 each coordinate Mg(2+).

The protein belongs to the P-Pant transferase superfamily. AcpS family. Mg(2+) serves as cofactor.

Its subcellular location is the cytoplasm. It carries out the reaction apo-[ACP] + CoA = holo-[ACP] + adenosine 3',5'-bisphosphate + H(+). Its function is as follows. Transfers the 4'-phosphopantetheine moiety from coenzyme A to a Ser of acyl-carrier-protein. The protein is Holo-[acyl-carrier-protein] synthase of Idiomarina loihiensis (strain ATCC BAA-735 / DSM 15497 / L2-TR).